We begin with the raw amino-acid sequence, 78 residues long: Beta-defensin 105A (78 aa).

The signal sequence occupies residues 1-27 (MALIKKTFFFLFAMFFILVQLSSGCQA). Cystine bridges form between C43–C74, C53–C67, and C57–C73.

The protein belongs to the beta-defensin family.

It is found in the secreted. Has antimicrobial activity. The polypeptide is Beta-defensin 105A (DEFB105A) (Pan troglodytes (Chimpanzee)).